Reading from the N-terminus, the 433-residue chain is Enolase (433 aa).

A (2R)-2-phosphoglycerate-binding site is contributed by glutamine 164. Glutamate 206 functions as the Proton donor in the catalytic mechanism. 3 residues coordinate Mg(2+): aspartate 243, glutamate 289, and aspartate 316. (2R)-2-phosphoglycerate-binding residues include lysine 341, arginine 370, serine 371, and lysine 392. Lysine 341 acts as the Proton acceptor in catalysis.

The protein belongs to the enolase family. Requires Mg(2+) as cofactor.

It localises to the cytoplasm. The protein resides in the secreted. Its subcellular location is the cell surface. The enzyme catalyses (2R)-2-phosphoglycerate = phosphoenolpyruvate + H2O. It participates in carbohydrate degradation; glycolysis; pyruvate from D-glyceraldehyde 3-phosphate: step 4/5. Its function is as follows. Catalyzes the reversible conversion of 2-phosphoglycerate (2-PG) into phosphoenolpyruvate (PEP). It is essential for the degradation of carbohydrates via glycolysis. The chain is Enolase from Borreliella afzelii (strain PKo) (Borrelia afzelii).